Reading from the N-terminus, the 310-residue chain is Quinolinate synthase (310 aa).

The iminosuccinate site is built by His-27 and Ser-44. Cys-89 is a [4Fe-4S] cluster binding site. Residues 115-117 (YVN) and Ser-132 contribute to the iminosuccinate site. Residue Cys-175 participates in [4Fe-4S] cluster binding. Residues 201-203 (HPE) and Thr-222 each bind iminosuccinate. Cys-267 is a [4Fe-4S] cluster binding site.

The protein belongs to the quinolinate synthase family. Type 2 subfamily. It depends on [4Fe-4S] cluster as a cofactor.

It localises to the cytoplasm. The enzyme catalyses iminosuccinate + dihydroxyacetone phosphate = quinolinate + phosphate + 2 H2O + H(+). Its pathway is cofactor biosynthesis; NAD(+) biosynthesis; quinolinate from iminoaspartate: step 1/1. In terms of biological role, catalyzes the condensation of iminoaspartate with dihydroxyacetone phosphate to form quinolinate. The chain is Quinolinate synthase from Thermus thermophilus (strain ATCC 27634 / DSM 579 / HB8).